The following is a 443-amino-acid chain: Chromosome partition protein MukF (443 aa).

Residues 209 to 237 are leucine-zipper; sequence LDETSGNLRELQDTLNAAGDKLQAQLLRI.

It belongs to the MukF family. As to quaternary structure, interacts, and probably forms a ternary complex, with MukE and MukB via its C-terminal region. The complex formation is stimulated by calcium or magnesium. It is required for an interaction between MukE and MukB.

Its subcellular location is the cytoplasm. It is found in the nucleoid. Involved in chromosome condensation, segregation and cell cycle progression. May participate in facilitating chromosome segregation by condensation DNA from both sides of a centrally located replisome during cell division. Not required for mini-F plasmid partitioning. Probably acts via its interaction with MukB and MukE. Overexpression results in anucleate cells. It has a calcium binding activity. The sequence is that of Chromosome partition protein MukF from Actinobacillus pleuropneumoniae serotype 7 (strain AP76).